The following is a 193-amino-acid chain: dCTP deaminase (193 aa).

Residues R110–R115, D128, V136–E138, Y171, K178, and Q182 each bind dCTP. E138 serves as the catalytic Proton donor/acceptor.

It belongs to the dCTP deaminase family. As to quaternary structure, homotrimer.

The catalysed reaction is dCTP + H2O + H(+) = dUTP + NH4(+). It functions in the pathway pyrimidine metabolism; dUMP biosynthesis; dUMP from dCTP (dUTP route): step 1/2. Functionally, catalyzes the deamination of dCTP to dUTP. This chain is dCTP deaminase, found in Aeromonas hydrophila subsp. hydrophila (strain ATCC 7966 / DSM 30187 / BCRC 13018 / CCUG 14551 / JCM 1027 / KCTC 2358 / NCIMB 9240 / NCTC 8049).